The sequence spans 499 residues: RNA polymerase sigma factor SigA (499 aa).

2 stretches are compositionally biased toward basic residues: residues 1–12 (MSSPKKNFKKPQ) and 77–87 (KKRRGRKPKHA). Disordered stretches follow at residues 1–25 (MSSPKKNFKKPQPKTENQKQALNEE) and 68–89 (QENKESDVPKKRRGRKPKHAPL). Positions 252–322 (LVTSNLRLVV…TRAIADQART (71 aa)) are sigma-70 factor domain-2. The Interaction with polymerase core subunit RpoC signature appears at 276 to 279 (DLIQ). Residues 331–412 (ETINRLAKAE…DTDAQMPDEF (82 aa)) are sigma-70 factor domain-3. Positions 425 to 480 (LLNNCLSEQEELIVRMRIGMPPYNETKTLDEVSQKIKIPREKIRQIETKAIRKLRQ) are sigma-70 factor domain-4. The H-T-H motif DNA-binding region spans 453–472 (LDEVSQKIKIPREKIRQIET).

It belongs to the sigma-70 factor family. RpoD/SigA subfamily. As to quaternary structure, interacts transiently with the RNA polymerase catalytic core.

The protein resides in the cytoplasm. In terms of biological role, sigma factors are initiation factors that promote the attachment of RNA polymerase to specific initiation sites and are then released. This sigma factor is the primary sigma factor during exponential growth. In Mycoplasma pneumoniae (strain ATCC 29342 / M129 / Subtype 1) (Mycoplasmoides pneumoniae), this protein is RNA polymerase sigma factor SigA.